Reading from the N-terminus, the 445-residue chain is MRYHPHTPEDVRAMLDVIGAESLDDLFRSIPERLRLARPLDLPPAADEITLFAELRALAARDDTAHPPFVGAGCYPHHVPPAVDQLLLRGEFFTAYTPYQPEVSQGTLQALFEWQTFVCLLTGMDVSNASMYDGATAMAEAALMATRVTGRSKIVVSAAVHPEYRKVLATYLRSTGDEIVTVPFGADGRTDLRALEAAVDGGTAAVIVGYPSFLGVVDALPQAAAIAKKAGALTVAVTAEAVALGLLQAPGALGADVAVGTFQSFGNPMSFGGPAPGFFAIREQFVRQMPGRVCGATVDKHGRRGFVLTLSTREQHIRREKATSNICTNSGLAALAATIHLALLGKQGLAELARLNFARARMLKDALGRAGIAPLFSAPPFNELAFDVGDAEAVVARLAKRGIAAGAPLARWYPELPRAKGALLSVATELHTPELIELFAQSVKG.

This sequence belongs to the GcvP family. N-terminal subunit subfamily. In terms of assembly, the glycine cleavage system is composed of four proteins: P, T, L and H. In this organism, the P 'protein' is a heterodimer of two subunits.

The enzyme catalyses N(6)-[(R)-lipoyl]-L-lysyl-[glycine-cleavage complex H protein] + glycine + H(+) = N(6)-[(R)-S(8)-aminomethyldihydrolipoyl]-L-lysyl-[glycine-cleavage complex H protein] + CO2. Functionally, the glycine cleavage system catalyzes the degradation of glycine. The P protein binds the alpha-amino group of glycine through its pyridoxal phosphate cofactor; CO(2) is released and the remaining methylamine moiety is then transferred to the lipoamide cofactor of the H protein. The protein is Probable glycine dehydrogenase (decarboxylating) subunit 1 of Anaeromyxobacter sp. (strain Fw109-5).